The sequence spans 390 residues: MSKHNWTLETQLVHNPFKTDGGTGAVSVPIQHASTFHQSSFEEFGAYDYSRSGTPTRTALEETIAALEGGTRGFAFSSGMAAISTAFLLLSQGDHVLVTEDVYGGTFRMVTEVLTRFGIEHTFVDMTDRNEVARSIKPNTKVIYMETPSNPTLGITDIKAVVQLAKENGCLTFLDNTFMTPALQRPLDLGVDIVLHSATKFLSGHSDVLSGLAAVKDEELGKQLYKLQNAFGAVLGVQDCWLVLRGLKTLQVRLEKASQTAQRLAEFFQKHPAVKRVYYPGLADHPGAETHKSQSTGAGAVLSFELESKEAVKKLVENVSLPVFAVSLGAVESILSYPATMSHAAMPKEEREKRGITDGLLRLSVGVEHADDLEHDFEQALKEIAPVSVR.

K200 carries the N6-(pyridoxal phosphate)lysine modification.

It belongs to the trans-sulfuration enzymes family. Homotetramer. The cofactor is pyridoxal 5'-phosphate.

Its subcellular location is the cytoplasm. The enzyme catalyses L,L-cystathionine + H2O = L-homocysteine + pyruvate + NH4(+). It catalyses the reaction an S-substituted L-cysteine + H2O = a thiol + pyruvate + NH4(+). It participates in amino-acid biosynthesis; L-methionine biosynthesis via de novo pathway; L-homocysteine from L-cystathionine: step 1/1. Its function is as follows. Catalyzes the transformation of cystathionine into homocysteine. Also exhibits cysteine desulfhydrase activity in vitro, producing sulfide from cysteine. The protein is Cystathionine beta-lyase MetC (metC) of Bacillus subtilis (strain 168).